We begin with the raw amino-acid sequence, 939 residues long: Isoleucine--tRNA ligase (939 aa).

The 'HIGH' region motif lies at 58 to 68 (PYANGDIHIGH). Glu574 contacts L-isoleucyl-5'-AMP. A 'KMSKS' region motif is present at residues 615–619 (KMSKS). Lys618 is a binding site for ATP. The Zn(2+) site is built by Cys902, Cys905, Cys922, and Cys925.

The protein belongs to the class-I aminoacyl-tRNA synthetase family. IleS type 1 subfamily. Monomer. Zn(2+) is required as a cofactor.

The protein resides in the cytoplasm. It catalyses the reaction tRNA(Ile) + L-isoleucine + ATP = L-isoleucyl-tRNA(Ile) + AMP + diphosphate. Its function is as follows. Catalyzes the attachment of isoleucine to tRNA(Ile). As IleRS can inadvertently accommodate and process structurally similar amino acids such as valine, to avoid such errors it has two additional distinct tRNA(Ile)-dependent editing activities. One activity is designated as 'pretransfer' editing and involves the hydrolysis of activated Val-AMP. The other activity is designated 'posttransfer' editing and involves deacylation of mischarged Val-tRNA(Ile). The chain is Isoleucine--tRNA ligase from Aromatoleum aromaticum (strain DSM 19018 / LMG 30748 / EbN1) (Azoarcus sp. (strain EbN1)).